Reading from the N-terminus, the 56-residue chain is Ovomucoid (56 aa).

Positions Val-6–Cys-56 constitute a Kazal-like domain. 3 disulfide bridges follow: Cys-8/Cys-38, Cys-16/Cys-35, and Cys-24/Cys-56. A glycan (N-linked (GlcNAc...) asparagine) is linked at Asn-45.

The protein resides in the secreted. This chain is Ovomucoid, found in Colinus virginianus (Northern bobwhite).